The following is a 435-amino-acid chain: Beta-arrestin arr-1 (435 aa).

The interval 358-382 (LTHSKPPESPERTDRGLPSIEATNG) is disordered. Over residues 362–372 (KPPESPERTDR) the composition is skewed to basic and acidic residues. Positions 390 to 394 (LIQLH) match the Clathrin box motif. The [DE]-X(1,2)-F-X-X-[FL]-X-X-X-R motif signature appears at 404–414 (DLIFEDFARMR). Residues 416–435 (HGNDSEDQPSPSANLPPSLL) are disordered. A compositionally biased stretch (low complexity) spans 424–435 (PSPSANLPPSLL).

Belongs to the arrestin family. As to quaternary structure, component of a complex composed of arr-1, daf-18 and mpz-1. Within the complex, interacts (via C-terminus) with mpz-1 (via PDZ domain) and phosphatase daf-18. May interact (via C-terminus) with clathrin chc-1 and beta-2 adaptin (AP2) apb-1. In terms of tissue distribution, expressed in head neurons, nerve ring and ventral nerve cord (at protein level). Expressed in the nervous system including the nerve ring and the ventral and dorsal nerve cords. Highly expressed in amphid chemosensory neurons AWA, AWB, AWC, ADL and ASH, and in hermaphrodite specific neuron HSN. Also expressed in the intestine.

Its subcellular location is the perikaryon. It localises to the cell projection. The protein localises to the dendrite. Adapter protein required for olfactory adaptation and recovery to volatile odorants, probably by desensitization of G-protein coupled receptors (GPCR). May play a role in clathrin-mediated GPCR endocytosis. Acts as a positive regulator of insulin-like daf-2 signaling pathway probably by forming a complex with mpz-1 and phosphatase daf-18 likely resulting in daf-18 inhibition. Involved in egg-laying. This is Beta-arrestin arr-1 from Caenorhabditis elegans.